The chain runs to 66 residues: Large ribosomal subunit protein uL29 (66 aa).

This sequence belongs to the universal ribosomal protein uL29 family.

The chain is Large ribosomal subunit protein uL29 from Nitrosococcus oceani (strain ATCC 19707 / BCRC 17464 / JCM 30415 / NCIMB 11848 / C-107).